The chain runs to 84 residues: Small ribosomal subunit protein uS17 (84 aa).

Belongs to the universal ribosomal protein uS17 family. Part of the 30S ribosomal subunit.

Its function is as follows. One of the primary rRNA binding proteins, it binds specifically to the 5'-end of 16S ribosomal RNA. This is Small ribosomal subunit protein uS17 from Aliivibrio fischeri (strain ATCC 700601 / ES114) (Vibrio fischeri).